Here is a 513-residue protein sequence, read N- to C-terminus: L-arabinose transport ATP-binding protein AraG (513 aa).

ABC transporter domains follow at residues 6-243 (LEMR…GMVG) and 264-508 (VKNW…TKTA). 38–45 (GENGAGKS) contacts ATP.

It belongs to the ABC transporter superfamily.

The protein localises to the cell membrane. The catalysed reaction is L-arabinose(out) + ATP + H2O = L-arabinose(in) + ADP + phosphate + H(+). Functionally, part of the binding-protein-dependent transport system for L-arabinose. Probably responsible for energy coupling to the transport system. In Geobacillus stearothermophilus (Bacillus stearothermophilus), this protein is L-arabinose transport ATP-binding protein AraG (araG).